Consider the following 240-residue polypeptide: Proteasome subunit beta type-1 (240 aa).

Residue Met1 is modified to N-acetylmethionine. The propeptide occupies 1-27 (MLSTAAYRDVERELGMGPHGSAGPVQL). A glycan (O-linked (GlcNAc) serine) is linked at Ser57. Residues Ser61 and Ser67 each carry the phosphoserine modification. Tyr149 bears the Phosphotyrosine mark. A Phosphoserine modification is found at Ser161. At Lys203 the chain carries N6-acetyllysine. The O-linked (GlcNAc) serine glycan is linked to Ser208.

The protein belongs to the peptidase T1B family. The 26S proteasome consists of a 20S proteasome core and two 19S regulatory subunits. The 20S proteasome core is a barrel-shaped complex made of 28 subunits that are arranged in four stacked rings. The two outer rings are each formed by seven alpha subunits, and the two inner rings are formed by seven beta subunits. The proteolytic activity is exerted by three beta-subunits PSMB5, PSMB6 and PSMB7. Interacts with SERPINB2. Interacts with RFPL4A. In terms of tissue distribution, detected in liver (at protein level).

Its subcellular location is the cytoplasm. The protein resides in the nucleus. Non-catalytic component of the 20S core proteasome complex involved in the proteolytic degradation of most intracellular proteins. This complex plays numerous essential roles within the cell by associating with different regulatory particles. Associated with two 19S regulatory particles, forms the 26S proteasome and thus participates in the ATP-dependent degradation of ubiquitinated proteins. The 26S proteasome plays a key role in the maintenance of protein homeostasis by removing misfolded or damaged proteins that could impair cellular functions, and by removing proteins whose functions are no longer required. Associated with the PA200 or PA28, the 20S proteasome mediates ubiquitin-independent protein degradation. This type of proteolysis is required in several pathways including spermatogenesis (20S-PA200 complex) or generation of a subset of MHC class I-presented antigenic peptides (20S-PA28 complex). In Mus musculus (Mouse), this protein is Proteasome subunit beta type-1 (Psmb1).